An 88-amino-acid chain; its full sequence is Small ribosomal subunit protein bS20 (88 aa).

The protein belongs to the bacterial ribosomal protein bS20 family.

Functionally, binds directly to 16S ribosomal RNA. The sequence is that of Small ribosomal subunit protein bS20 from Desulforudis audaxviator (strain MP104C).